A 315-amino-acid chain; its full sequence is C1GALT1-specific chaperone 1-like protein (315 aa).

Residues Met1–Ser8 are Cytoplasmic-facing. The chain crosses the membrane as a helical; Signal-anchor for type II membrane protein span at residues Phe9–Ile29. Residues His30–Asp315 are Lumenal-facing. N-linked (GlcNAc...) asparagine glycosylation is found at Asn55 and Asn301.

It belongs to the glycosyltransferase 31 family. Beta3-Gal-T subfamily.

The protein resides in the membrane. This Homo sapiens (Human) protein is C1GALT1-specific chaperone 1-like protein.